We begin with the raw amino-acid sequence, 430 residues long: Adenylosuccinate synthetase (430 aa).

GTP contacts are provided by residues 12 to 18 (GDEGKGK) and 40 to 42 (GHT). The active-site Proton acceptor is aspartate 13. Aspartate 13 and glycine 40 together coordinate Mg(2+). IMP contacts are provided by residues 13–16 (DEGK), 38–41 (NAGH), threonine 128, arginine 142, glutamine 223, threonine 238, and arginine 302. Histidine 41 serves as the catalytic Proton donor. 298–304 (TTTGRPR) serves as a coordination point for substrate. Residues arginine 304, 330 to 332 (SID), and 412 to 414 (SVG) each bind GTP.

Belongs to the adenylosuccinate synthetase family. As to quaternary structure, homodimer. The cofactor is Mg(2+).

It localises to the cytoplasm. It catalyses the reaction IMP + L-aspartate + GTP = N(6)-(1,2-dicarboxyethyl)-AMP + GDP + phosphate + 2 H(+). Its pathway is purine metabolism; AMP biosynthesis via de novo pathway; AMP from IMP: step 1/2. In terms of biological role, plays an important role in the de novo pathway of purine nucleotide biosynthesis. Catalyzes the first committed step in the biosynthesis of AMP from IMP. This is Adenylosuccinate synthetase from Streptococcus equi subsp. zooepidemicus (strain H70).